A 318-amino-acid chain; its full sequence is Myoblast determination protein 1 (318 aa).

Residue Met1 forms a Peptide (Met-Gly) (interchain with G-Cter in ubiquitin) linkage. The residue at position 104 (Lys104) is an N6-methyllysine; by EHMT2. A bHLH domain is found at 109–160; sequence DRRKAATMRERRRLSKVNEAFETLKRCTSSNPNQRLPKVEILRNAIRYIEGL. Disordered regions lie at residues 175-224 and 262-318; these read AAFY…RQNG and SPAA…YQVL. Residues 196-206 show a composition bias toward polar residues; the sequence is SDASSPRSNCS. Low complexity predominate over residues 262–271; sequence SPAAPSLLLP. Residues 272 to 282 show a composition bias toward pro residues; that stretch reads DAPPESPPGPP. Over residues 290–304 the composition is skewed to polar residues; sequence AEQGTQTPSPDSTPQ.

In terms of assembly, efficient DNA binding requires dimerization with another bHLH protein. Seems to form active heterodimers with ITF-2. Interacts with SUV39H1. Interacts with DDX5. Interacts with CHD2. Interacts with TSC22D3. Interacts with SETD3. Interacts with P-TEFB complex; promotes the transcriptional activity of MYOD1 through its CDK9-mediated phosphorylation. Interacts with CSRP3. Interacts with NUPR1. Phosphorylated by CDK9. This phosphorylation promotes its function in muscle differentiation. Post-translationally, acetylated by a complex containing EP300 and PCAF. The acetylation is essential to activate target genes. Conversely, its deacetylation by SIRT1 inhibits its function. In terms of processing, ubiquitinated on the N-terminus; which is required for proteasomal degradation. Methylation at Lys-104 by EHMT2/G9a inhibits myogenic activity.

The protein localises to the nucleus. In terms of biological role, acts as a transcriptional activator that promotes transcription of muscle-specific target genes and plays a role in muscle differentiation. Together with MYF5 and MYOG, co-occupies muscle-specific gene promoter core region during myogenesis. Induces fibroblasts to differentiate into myoblasts. Interacts with and is inhibited by the twist protein. This interaction probably involves the basic domains of both proteins. In Rattus norvegicus (Rat), this protein is Myoblast determination protein 1 (Myod1).